The sequence spans 297 residues: Homoserine kinase (297 aa).

An ATP-binding site is contributed by 82 to 92 (PVSRGLGSSAA).

Belongs to the GHMP kinase family. Homoserine kinase subfamily.

It is found in the cytoplasm. It catalyses the reaction L-homoserine + ATP = O-phospho-L-homoserine + ADP + H(+). The protein operates within amino-acid biosynthesis; L-threonine biosynthesis; L-threonine from L-aspartate: step 4/5. Functionally, catalyzes the ATP-dependent phosphorylation of L-homoserine to L-homoserine phosphate. In Clostridium botulinum (strain Okra / Type B1), this protein is Homoserine kinase.